The following is a 219-amino-acid chain: Outer membrane virulence protein YopE (219 aa).

The segment at 1-37 (MKISSFISTSLPLPTSVSGSSSVGEMSGRSVSQQTSD) is disordered. The span at 8–32 (STSLPLPTSVSGSSSVGEMSGRSVS) shows a compositional bias: low complexity. In terms of domain architecture, Bacterial Rho-GAP spans 101 to 219 (SFSDSIKQLA…QQMQKLLSLM (119 aa)).

Belongs to the YopE family.

Its subcellular location is the cell outer membrane. In terms of biological role, essential virulence determinant; cytotoxic effector, involved in resistance to phagocytosis. This Yersinia pestis protein is Outer membrane virulence protein YopE (yopE).